Here is a 562-residue protein sequence, read N- to C-terminus: Carboxylesterase 1E (562 aa).

An N-terminal signal peptide occupies residues 1–19; the sequence is MCLSALILVSLAAFTAGAG. N-linked (GlcNAc...) asparagine glycosylation occurs at asparagine 80. Cysteine 88 and cysteine 117 are oxidised to a cystine. Residue serine 222 is the Acyl-ester intermediate of the active site. Cysteines 274 and 285 form a disulfide. An N-linked (GlcNAc...) asparagine glycan is attached at asparagine 276. Catalysis depends on charge relay system residues glutamate 354 and histidine 467. The N-linked (GlcNAc...) asparagine glycan is linked to asparagine 490. Positions 559–562 match the Prevents secretion from ER motif; sequence HTEL.

It belongs to the type-B carboxylesterase/lipase family.

Its subcellular location is the endoplasmic reticulum lumen. It localises to the microsome membrane. The enzyme catalyses a carboxylic ester + H2O = an alcohol + a carboxylate + H(+). It carries out the reaction all-trans-retinyl hexadecanoate + H2O = all-trans-retinol + hexadecanoate + H(+). In terms of biological role, involved in the detoxification of xenobiotics and in the activation of ester and amide prodrugs. Hydrolyzes retinyl esters. The chain is Carboxylesterase 1E from Mus musculus (Mouse).